The chain runs to 275 residues: 3-methyl-2-oxobutanoate hydroxymethyltransferase (275 aa).

Mg(2+) contacts are provided by Asp-49 and Asp-88. 3-methyl-2-oxobutanoate contacts are provided by residues 49–50, Asp-88, and Lys-118; that span reads DS. Glu-120 is a Mg(2+) binding site. Glu-187 acts as the Proton acceptor in catalysis.

The protein belongs to the PanB family. Homodecamer; pentamer of dimers. Mg(2+) serves as cofactor.

It localises to the cytoplasm. It catalyses the reaction 3-methyl-2-oxobutanoate + (6R)-5,10-methylene-5,6,7,8-tetrahydrofolate + H2O = 2-dehydropantoate + (6S)-5,6,7,8-tetrahydrofolate. The protein operates within cofactor biosynthesis; (R)-pantothenate biosynthesis; (R)-pantoate from 3-methyl-2-oxobutanoate: step 1/2. In terms of biological role, catalyzes the reversible reaction in which hydroxymethyl group from 5,10-methylenetetrahydrofolate is transferred onto alpha-ketoisovalerate to form ketopantoate. This Nitrobacter hamburgensis (strain DSM 10229 / NCIMB 13809 / X14) protein is 3-methyl-2-oxobutanoate hydroxymethyltransferase.